We begin with the raw amino-acid sequence, 357 residues long: Protein FAM118A (357 aa).

M1 bears the N-acetylmethionine mark. A helical membrane pass occupies residues L30–I46. S311 bears the Phosphoserine mark.

The protein belongs to the FAM118 family.

It is found in the membrane. This is Protein FAM118A (Fam118a) from Mus musculus (Mouse).